Consider the following 95-residue polypeptide: Co-chaperonin GroES (95 aa).

It belongs to the GroES chaperonin family. Heptamer of 7 subunits arranged in a ring. Interacts with the chaperonin GroEL.

It is found in the cytoplasm. Its function is as follows. Together with the chaperonin GroEL, plays an essential role in assisting protein folding. The GroEL-GroES system forms a nano-cage that allows encapsulation of the non-native substrate proteins and provides a physical environment optimized to promote and accelerate protein folding. GroES binds to the apical surface of the GroEL ring, thereby capping the opening of the GroEL channel. The chain is Co-chaperonin GroES from Bordetella bronchiseptica (strain ATCC BAA-588 / NCTC 13252 / RB50) (Alcaligenes bronchisepticus).